Reading from the N-terminus, the 284-residue chain is Tropomyosin Por p 1.0101 (284 aa).

The residue at position 1 (methionine 1) is an N-acetylmethionine. The tract at residues 1-21 is disordered; sequence MDAIKKKMQAMKLEKDDAMDR. A coiled-coil region spans residues 1–280; the sequence is MDAIKKKMQA…TDELDQAFSE (280 aa). The span at 12 to 21 shows a compositional bias: basic and acidic residues; it reads KLEKDDAMDR.

The protein belongs to the tropomyosin family. Homodimer. In terms of tissue distribution, expressed in muscle (at protein level). Expressed in pincer muscles.

Functionally, tropomyosin, in association with the troponin complex, plays a central role in the calcium dependent regulation of muscle contraction. This is Tropomyosin Por p 1.0101 from Portunus pelagicus (Blue swimmer crab).